The primary structure comprises 67 residues: Conotoxin ArMLKM-01 (67 aa).

The first 24 residues, 1–24 (MLKMEVVLFTFLVLFPLSTLQLET), serve as a signal peptide directing secretion. A propeptide spanning residues 25–51 (DQPVERYVENKQDLNPDESRNFMLPIV) is cleaved from the precursor. 3 disulfide bridges follow: cysteine 54-cysteine 65, cysteine 55-cysteine 63, and cysteine 58-cysteine 66.

The protein belongs to the conotoxin M superfamily. As to expression, expressed by the venom duct.

Its subcellular location is the secreted. This is Conotoxin ArMLKM-01 from Conus arenatus (Sand-dusted cone).